The following is a 145-amino-acid chain: Heat shock protein hsp-16.2 (145 aa).

The sHSP domain maps to 32–137; it reads VCRISPSESS…QGRSIPIQQA (106 aa).

The protein belongs to the small heat shock protein (HSP20) family.

This chain is Heat shock protein hsp-16.2, found in Caenorhabditis elegans.